The following is a 130-amino-acid chain: Protein ApaG (130 aa).

Positions 3 to 127 (RAVTRQIEVT…FSLDSPDNKR (125 aa)) constitute an ApaG domain.

This chain is Protein ApaG, found in Bradyrhizobium diazoefficiens (strain JCM 10833 / BCRC 13528 / IAM 13628 / NBRC 14792 / USDA 110).